The primary structure comprises 176 residues: MNIDAISIGSNPPEDVNVIIEVPVGGQPIKYEMDKKAGALIVDRFLYTPMTYPGNYGFVPHTLSEDGDPIDVLVCNTRPLIPGCVINVRPIGVLVMEDNSGKDEKIIAVPSPHLTRRYEKIHDYTDMPEITLKQIAHFFEHYKDLEPGKWVKIGDWGDEDYARKFIVEAIERAKGK.

Positions 30, 44, and 56 each coordinate substrate. Residues aspartate 66, aspartate 71, and aspartate 103 each coordinate Mg(2+). Tyrosine 142 contacts substrate.

It belongs to the PPase family. In terms of assembly, homohexamer. Mg(2+) is required as a cofactor.

The protein localises to the cytoplasm. The catalysed reaction is diphosphate + H2O = 2 phosphate + H(+). Functionally, catalyzes the hydrolysis of inorganic pyrophosphate (PPi) forming two phosphate ions. This Brucella melitensis biotype 1 (strain ATCC 23456 / CCUG 17765 / NCTC 10094 / 16M) protein is Inorganic pyrophosphatase.